Consider the following 595-residue polypeptide: Isoprene synthase, chloroplastic (595 aa).

Residues 1–37 (MATELLCLHRPISLTHKLFRNPLPKVIQATPLTLKLR) constitute a chloroplast transit peptide. Position 345 (Asp-345) interacts with dimethylallyl diphosphate. Positions 345 and 349 each coordinate Mg(2+). Positions 345-349 (DDIYD) match the DDXXD motif motif. Dimethylallyl diphosphate is bound by residues Glu-423, Arg-486, and Asn-489. Mg(2+) contacts are provided by Asn-489, Ser-493, and Glu-497.

Belongs to the terpene synthase family. Tpsb subfamily. Mg(2+) is required as a cofactor. As to expression, predominantly expressed in leaves.

It is found in the plastid. It localises to the chloroplast. The enzyme catalyses dimethylallyl diphosphate = isoprene + diphosphate. Its pathway is terpene metabolism. Lyase that catalyzes the formation of isoprene from dimethylallyl diphosphate, but not from isopentenyl diphosphate or geranyl diphosphate. The sequence is that of Isoprene synthase, chloroplastic from Populus alba (White poplar).